The primary structure comprises 234 residues: Sugar fermentation stimulation protein homolog (234 aa).

This sequence belongs to the SfsA family.

This is Sugar fermentation stimulation protein homolog from Shewanella halifaxensis (strain HAW-EB4).